We begin with the raw amino-acid sequence, 88 residues long: N(2)-fixation sustaining protein CowN (88 aa).

Belongs to the CowN family.

Is required to sustain N(2)-dependent growth in the presence of low levels of carbon monoxide (CO). Probably acts by protecting the N(2) fixation ability of the nitrogenase complex, which is inactivated in the presence of CO. This is N(2)-fixation sustaining protein CowN from Rhodomicrobium vannielii (strain ATCC 17100 / DSM 162 / LMG 4299 / NCIMB 10020 / ATH 3.1.1).